A 547-amino-acid chain; its full sequence is Large cysteine-rich periplasmic protein OmcB (547 aa).

A signal peptide spans 1-22 (MNKLIRRAVTIFAVTSVASLFA). Residues 23-40 (SGVLETSMAESLSTNVIS) constitute a propeptide that is removed on maturation. A disordered region spans residues 45–84 (KAKDNTSHKSKKARKNHSKETPVDRKEVAPVHESKATGPK). Residues 52 to 61 (HKSKKARKNH) show a composition bias toward basic residues. Residues 62–79 (SKETPVDRKEVAPVHESK) are compositionally biased toward basic and acidic residues.

In terms of assembly, part of a disulfide cross-linked outer membrane complex (COMC) composed of the major outer membrane porin (MOMP), the small cysteine-rich protein (OmcA) and the large cysteine-rich periplasmic protein (OmcB).

Its subcellular location is the periplasm. Functionally, in elementary bodies (EBs, the infectious stage, which is able to survive outside the host cell) provides the structural integrity of the outer envelope through disulfide cross-links with the small cysteine-rich protein and the major outer membrane protein. It has been described in publications as the Sarkosyl-insoluble COMC (Chlamydia outer membrane complex), and serves as the functional equivalent of peptidoglycan. The polypeptide is Large cysteine-rich periplasmic protein OmcB (omcB) (Chlamydia trachomatis serovar D (strain ATCC VR-885 / DSM 19411 / UW-3/Cx)).